The following is a 261-amino-acid chain: Matrix metalloproteinase-26 (261 aa).

A signal peptide spans 1–17 (MQLVILRVTIFLPWCFA). The propeptide occupies 18 to 89 (VPVPPAADHK…PHCGVPDGSD (72 aa)). Asn64 carries N-linked (GlcNAc...) asparagine glycosylation. Positions 80-87 (PHCGVPDG) match the Cysteine switch motif. The Zn(2+) site is built by Cys82 and His208. Glu209 is a catalytic residue. Zn(2+) is bound by residues His212 and His218. A glycan (N-linked (GlcNAc...) asparagine) is linked at Asn221.

The protein belongs to the peptidase M10A family. Requires Zn(2+) as cofactor. The cofactor is Ca(2+). Expressed specifically in uterus and placenta. Is also widely expressed in malignant tumors from different sources as well as in diverse tumor cell lines.

The protein localises to the secreted. It localises to the extracellular space. Its subcellular location is the extracellular matrix. Functionally, may hydrolyze collagen type IV, fibronectin, fibrinogen, beta-casein, type I gelatin and alpha-1 proteinase inhibitor. Is also able to activate progelatinase B. This Homo sapiens (Human) protein is Matrix metalloproteinase-26 (MMP26).